Consider the following 141-residue polypeptide: Large ribosomal subunit protein uL11 (141 aa).

It belongs to the universal ribosomal protein uL11 family. Part of the ribosomal stalk of the 50S ribosomal subunit. Interacts with L10 and the large rRNA to form the base of the stalk. L10 forms an elongated spine to which L12 dimers bind in a sequential fashion forming a multimeric L10(L12)X complex. One or more lysine residues are methylated.

Forms part of the ribosomal stalk which helps the ribosome interact with GTP-bound translation factors. This Geobacillus thermodenitrificans (strain NG80-2) protein is Large ribosomal subunit protein uL11.